The chain runs to 69 residues: uncharacterized protein (69 aa).

Residues 1 to 19 (MKRIWVSLMIAITACSAHA) form the signal peptide.

This is an uncharacterized protein from Pasteurella multocida (strain Pm70).